Reading from the N-terminus, the 353-residue chain is UDP-N-acetylglucosamine--N-acetylmuramyl-(pentapeptide) pyrophosphoryl-undecaprenol N-acetylglucosamine transferase (353 aa).

UDP-N-acetyl-alpha-D-glucosamine-binding positions include 10 to 12, N124, S183, and Q283; that span reads TGG.

The protein belongs to the glycosyltransferase 28 family. MurG subfamily.

The protein resides in the cell inner membrane. The enzyme catalyses di-trans,octa-cis-undecaprenyl diphospho-N-acetyl-alpha-D-muramoyl-L-alanyl-D-glutamyl-meso-2,6-diaminopimeloyl-D-alanyl-D-alanine + UDP-N-acetyl-alpha-D-glucosamine = di-trans,octa-cis-undecaprenyl diphospho-[N-acetyl-alpha-D-glucosaminyl-(1-&gt;4)]-N-acetyl-alpha-D-muramoyl-L-alanyl-D-glutamyl-meso-2,6-diaminopimeloyl-D-alanyl-D-alanine + UDP + H(+). It participates in cell wall biogenesis; peptidoglycan biosynthesis. Its function is as follows. Cell wall formation. Catalyzes the transfer of a GlcNAc subunit on undecaprenyl-pyrophosphoryl-MurNAc-pentapeptide (lipid intermediate I) to form undecaprenyl-pyrophosphoryl-MurNAc-(pentapeptide)GlcNAc (lipid intermediate II). This is UDP-N-acetylglucosamine--N-acetylmuramyl-(pentapeptide) pyrophosphoryl-undecaprenol N-acetylglucosamine transferase from Helicobacter pylori (strain G27).